Here is a 676-residue protein sequence, read N- to C-terminus: Symportin 1 (676 aa).

Positions 1 to 10 (MGKTRRNRVR) are enriched in basic residues. Residues 1-28 (MGKTRRNRVRNRTDPIAKPVKPPTDPEL) are disordered. One copy of the ARM 1 repeat lies at 183–216 (TILRLLFRLISADIAPQDIYEEAISCLTTLSEDN). The disordered stretch occupies residues 325 to 385 (KGNQGSRESP…EDDEDDDDDS (61 aa)). Acidic residues-rich tracts occupy residues 338 to 354 (ADEEWNGFDDADGDAMD) and 363 to 385 (EDQEEDYEEIDVKEDDEDDDDDS). Residues 420–453 (TAVPQLIRLSNLPIDSDESLTIQSHALSALNNIS) form an ARM 2 repeat.

Belongs to the nuclear import and ribosome assembly adapter family. As to quaternary structure, component of a hexameric 5S RNP precursor complex, composed of 5S RNA, RRS1, RPF2, RPL5, RPL11 and SYO1; this complex acts as a precursor for ribosome assembly.

Functionally, involved in ribosomal large subunit assembly. This chain is Symportin 1, found in Chaetomium thermophilum (strain DSM 1495 / CBS 144.50 / IMI 039719) (Thermochaetoides thermophila).